We begin with the raw amino-acid sequence, 354 residues long: uncharacterized protein (354 aa).

A signal peptide spans Met1 to Ala21. Cys22 carries N-palmitoyl cysteine lipidation. A lipid anchor (S-diacylglycerol cysteine) is attached at Cys22.

It is found in the cell membrane. The protein localises to the membrane raft. This is an uncharacterized protein from Bacillus subtilis (strain 168).